Consider the following 2476-residue polypeptide: Non-reducing polyketide synthase ausA (2476 aa).

Residues 14 to 253 (VLFGPKYPEV…HHSNHTQAVE (240 aa)) form an N-terminal acylcarrier protein transacylase domain (SAT) region. The 417-residue stretch at 379–795 (AVPIAVTGMA…GSNAAIVLRE (417 aa)) folds into the Ketosynthase family 3 (KS3) domain. Catalysis depends on for beta-ketoacyl synthase activity residues Cys-544, His-679, and His-718. The segment at 906–1210 (ICFGGQTGDT…LPTDLSGAQA (305 aa)) is malonyl-CoA:ACP transacylase (MAT) domain. Ser-993 acts as the For acyl/malonyl transferase activity in catalysis. Residues 1277–1405 (QEASLVRLLR…GRVSLQAAGS (129 aa)) are N-terminal hotdog fold. The 308-residue stretch at 1277–1584 (QEASLVRLLR…FTGVSIQSLK (308 aa)) folds into the PKS/mFAS DH domain. Positions 1280 to 1583 (SLVRLLRQDG…TFTGVSIQSL (304 aa)) are product template (PT) domain. The active-site Proton acceptor; for dehydratase activity is the His-1310. Residues 1433 to 1584 (SSSGLKRSTV…FTGVSIQSLK (152 aa)) are C-terminal hotdog fold. Asp-1491 functions as the Proton donor; for dehydratase activity in the catalytic mechanism. Residues 1626-1700 (DGDLLAVQTM…GLVQRIFPGH (75 aa)) enclose the Carrier domain. Ser-1660 is modified (O-(pantetheine 4'-phosphoryl)serine). Residues 1862–2095 (QHASEHKLLH…GFNWVDWTDN (234 aa)) are methyltransferase (CMeT) domain. The segment at 2128–2476 (NTVQEQTVLY…YEFLRRHVGL (349 aa)) is thioesterase (TE) domain. Residues Ser-2251, Asp-2413, and His-2445 each act as for thioesterase activity in the active site.

It carries out the reaction 3 malonyl-CoA + acetyl-CoA + 2 S-adenosyl-L-methionine = 3,5-dimethylorsellinate + 2 S-adenosyl-L-homocysteine + 3 CO2 + 4 CoA. Its pathway is secondary metabolite biosynthesis; terpenoid biosynthesis. In terms of biological role, non-reducing polyketide synthase; part of the gene cluster A that mediates the biosynthesis of austinol and dehydroaustinol, two fungal meroterpenoids. The first step of the pathway is the synthesis of 3,5-dimethylorsellinic acid by the polyketide synthase ausA. 3,5-dimethylorsellinic acid is then prenylated by the polyprenyl transferase ausN. Further epoxidation by the FAD-dependent monooxygenase ausM and cyclization by the probable terpene cyclase ausL lead to the formation of protoaustinoid A. Protoaustinoid A is then oxidized to spiro-lactone preaustinoid A3 by the combined action of the FAD-binding monooxygenases ausB and ausC, and the dioxygenase ausE. Acid-catalyzed keto-rearrangement and ring contraction of the tetraketide portion of preaustinoid A3 by ausJ lead to the formation of preaustinoid A4. The aldo-keto reductase ausK, with the help of ausH, is involved in the next step by transforming preaustinoid A4 into isoaustinone which is in turn hydroxylated by the P450 monooxygenase ausI to form austinolide. Finally, the cytochrome P450 monooxygenase ausG modifies austinolide to austinol. Austinol can be further modified to dehydroaustinol which forms a diffusible complex with diorcinol that initiates conidiation. Due to genetic rearrangements of the clusters and the subsequent loss of some enzymes, the end products of the Emericella nidulans austinoid biosynthesis clusters are austinol and dehydroaustinol, even if additional enzymes, such as the O-acetyltransferase ausQ and the cytochrome P450 monooxygenase ausR are still functional. The protein is Non-reducing polyketide synthase ausA of Emericella nidulans (strain FGSC A4 / ATCC 38163 / CBS 112.46 / NRRL 194 / M139) (Aspergillus nidulans).